The following is a 103-amino-acid chain: Protein SUP-1 (103 aa).

Residues 1–16 form the signal peptide; that stretch reads MMSYIALAACIGLAMA. Over 17 to 75 the chain is Extracellular; sequence ANVDHDVKSAVNEVTTTKDGDTYCPVPLVGTKCGTSSIFHYWKCCGELNKECCFNLQTW. The chain crosses the membrane as a helical span at residues 76–96; the sequence is VWVTLALFGVIFIASFVISLV. Residues 97 to 103 lie on the Cytoplasmic side of the membrane; the sequence is RCICCRK.

Expressed in a subset of neurons and in body wall muscles. In the nervous system, expressed specifically in cholinergic motor neurons of the ventral nerve cord, a subset of cholinergic head neurons, anterior sublateral neurons, and body sublateral neurons (at protein level).

It localises to the cell membrane. The protein localises to the perikaryon. The protein resides in the cell projection. Its subcellular location is the synapse. It is found in the cytoplasmic vesicle. It localises to the secretory vesicle. The protein localises to the synaptic vesicle. Its function is as follows. May be involved in trafficking or stabilization of the vesicular acetylcholine transporter unc-17. The sequence is that of Protein SUP-1 from Caenorhabditis elegans.